The chain runs to 338 residues: Ribosomal RNA large subunit methyltransferase F (338 aa).

The tract at residues 1-21 is disordered; it reads MTQKKNKPTQKKKGLHPRNPH.

The protein belongs to the methyltransferase superfamily. METTL16/RlmF family.

Its subcellular location is the cytoplasm. It carries out the reaction adenosine(1618) in 23S rRNA + S-adenosyl-L-methionine = N(6)-methyladenosine(1618) in 23S rRNA + S-adenosyl-L-homocysteine + H(+). Specifically methylates the adenine in position 1618 of 23S rRNA. The polypeptide is Ribosomal RNA large subunit methyltransferase F (Photobacterium profundum (strain SS9)).